The chain runs to 339 residues: Anthranilate phosphoribosyltransferase (339 aa).

Residues glycine 78, 81–82, threonine 86, 88–91, 106–114, and serine 118 each bind 5-phospho-alpha-D-ribose 1-diphosphate; these read GD, NAST, and KHGNRSVTS. Glycine 78 is a binding site for anthranilate. Serine 90 serves as a coordination point for Mg(2+). Asparagine 109 lines the anthranilate pocket. Arginine 164 is an anthranilate binding site. 2 residues coordinate Mg(2+): aspartate 225 and glutamate 226. Residues 248 to 265 are compositionally biased toward basic and acidic residues; it reads TVAPEDVGLDRADPKDVA. Residues 248–271 are disordered; the sequence is TVAPEDVGLDRADPKDVAGADPET.

Belongs to the anthranilate phosphoribosyltransferase family. Homodimer. Mg(2+) serves as cofactor.

It catalyses the reaction N-(5-phospho-beta-D-ribosyl)anthranilate + diphosphate = 5-phospho-alpha-D-ribose 1-diphosphate + anthranilate. It functions in the pathway amino-acid biosynthesis; L-tryptophan biosynthesis; L-tryptophan from chorismate: step 2/5. Catalyzes the transfer of the phosphoribosyl group of 5-phosphorylribose-1-pyrophosphate (PRPP) to anthranilate to yield N-(5'-phosphoribosyl)-anthranilate (PRA). This Methanopyrus kandleri (strain AV19 / DSM 6324 / JCM 9639 / NBRC 100938) protein is Anthranilate phosphoribosyltransferase.